We begin with the raw amino-acid sequence, 215 residues long: Nascent polypeptide-associated complex subunit alpha (215 aa).

Residues 1-81 (MPGEATETVP…SEKKARKAMS (81 aa)) are disordered. A compositionally biased stretch (polar residues) spans 9–28 (VPATEQELPQPQAETGSGTE). Residues 29 to 42 (SDSDESVPELEEQD) show a composition bias toward acidic residues. Ser43 carries the post-translational modification Phosphoserine; by ILK1. Over residues 44-57 (TQATTQQAQLAAAA) the composition is skewed to low complexity. The tract at residues 69-80 (QSRSEKKARKAM) is required for DNA-binding. The NAC-A/B domain maps to 70-135 (SRSEKKARKA…AKIEDLSQQA (66 aa)). Residues 93 to 108 (RVTIRKSKNILFVITK) form an RNA/DNA-binding region. At Ser132 the chain carries Phosphoserine. Position 142 is an N6-acetyllysine; alternate (Lys142). Residue Lys142 forms a Glycyl lysine isopeptide (Lys-Gly) (interchain with G-Cter in SUMO2); alternate linkage. Position 159 is a phosphothreonine; by GSK3-beta (Thr159). At Thr161 the chain carries Phosphothreonine. Residues Ser166, Ser186, Ser191, and Ser203 each carry the phosphoserine modification. The UBA domain occupies 176-213 (VEVKDIELVMSQANVSRAKAVRALKNNSNDIVNAIMEL).

It belongs to the NAC-alpha family. In terms of assembly, part of the nascent polypeptide-associated complex (NAC), which is a heterodimer of NACA and BTF3 (via NAC-A/B domains). NAC associates with ribosomes through the BTF3/NACB subunit and contacts the ribosomal protein L23, which is positioned near the exiting site. Both subunits can contact nascent polypeptide chains. NACA may also form homodimers, and only this form binds DNA. Interacts with TBP and JUN. Phosphorylation of Ser-43 by ILK during cell adhesion may promote nuclear localization. Phosphorylation of Thr-159 by GSK3B may promote proteasome mediated degradation.

It is found in the cytoplasm. Its subcellular location is the nucleus. In terms of biological role, prevents inappropriate targeting of non-secretory polypeptides to the endoplasmic reticulum (ER). Binds to nascent polypeptide chains as they emerge from the ribosome and blocks their interaction with the signal recognition particle (SRP), which normally targets nascent secretory peptides to the ER. Also reduces the inherent affinity of ribosomes for protein translocation sites in the ER membrane (M sites). May act as a specific coactivator for JUN, binding to DNA and stabilizing the interaction of JUN homodimers with target gene promoters. The polypeptide is Nascent polypeptide-associated complex subunit alpha (NACA) (Pongo abelii (Sumatran orangutan)).